The primary structure comprises 205 residues: Histone H1, early embryonic (205 aa).

Disordered stretches follow at residues 1–21 (MAEK…HPPA) and 94–205 (AKAQ…AKSK). Residues 17-91 (AHPPAAEMVA…GASGSFKVNV (75 aa)) form the H15 domain. The span at 98 to 124 (ASEKAKKEKEKAKLLAQREKAKEKGCS) shows a compositional bias: basic and acidic residues. 2 stretches are compositionally biased toward basic residues: residues 135-150 (PKKV…KPVK) and 157-205 (EKKK…AKSK).

This sequence belongs to the histone H1/H5 family.

The protein localises to the nucleus. It localises to the chromosome. In terms of biological role, histones H1 are necessary for the condensation of nucleosome chains into higher-order structures. The protein is Histone H1, early embryonic of Strongylocentrotus purpuratus (Purple sea urchin).